Here is a 578-residue protein sequence, read N- to C-terminus: Isocitrate dehydrogenase kinase/phosphatase (578 aa).

Residues 315 to 321 (APGIRGM) and K336 each bind ATP. D371 is an active-site residue.

Belongs to the AceK family.

The protein resides in the cytoplasm. The enzyme catalyses L-seryl-[isocitrate dehydrogenase] + ATP = O-phospho-L-seryl-[isocitrate dehydrogenase] + ADP + H(+). Its function is as follows. Bifunctional enzyme which can phosphorylate or dephosphorylate isocitrate dehydrogenase (IDH) on a specific serine residue. This is a regulatory mechanism which enables bacteria to bypass the Krebs cycle via the glyoxylate shunt in response to the source of carbon. When bacteria are grown on glucose, IDH is fully active and unphosphorylated, but when grown on acetate or ethanol, the activity of IDH declines drastically concomitant with its phosphorylation. In Escherichia coli O157:H7, this protein is Isocitrate dehydrogenase kinase/phosphatase.